Here is a 455-residue protein sequence, read N- to C-terminus: tRNA modification GTPase MnmE (455 aa).

Residues arginine 22, glutamate 85, and arginine 124 each contribute to the (6S)-5-formyl-5,6,7,8-tetrahydrofolate site. In terms of domain architecture, TrmE-type G spans 220–377; the sequence is GIYTVIVGRP…VEKAIKEAIL (158 aa). Residue asparagine 230 participates in K(+) binding. GTP-binding positions include 230–235, 249–255, and 274–277; these read NVGKSS, TDIPGTT, and DTAG. A Mg(2+)-binding site is contributed by serine 234. K(+) is bound by residues threonine 249, isoleucine 251, and threonine 254. Threonine 255 is a Mg(2+) binding site. Position 455 (lysine 455) interacts with (6S)-5-formyl-5,6,7,8-tetrahydrofolate.

Belongs to the TRAFAC class TrmE-Era-EngA-EngB-Septin-like GTPase superfamily. TrmE GTPase family. In terms of assembly, homodimer. Heterotetramer of two MnmE and two MnmG subunits. Requires K(+) as cofactor.

It localises to the cytoplasm. Its function is as follows. Exhibits a very high intrinsic GTPase hydrolysis rate. Involved in the addition of a carboxymethylaminomethyl (cmnm) group at the wobble position (U34) of certain tRNAs, forming tRNA-cmnm(5)s(2)U34. In Caldicellulosiruptor saccharolyticus (strain ATCC 43494 / DSM 8903 / Tp8T 6331), this protein is tRNA modification GTPase MnmE.